We begin with the raw amino-acid sequence, 320 residues long: Heterogeneous nuclear ribonucleoprotein A1-like 3 (320 aa).

RRM domains follow at residues 14–97 (RKLF…DSQR) and 105–184 (KKIF…LSKQ). 2 disordered regions span residues 182-218 (SKQE…NFGR) and 271-320 (SNFG…GRRF). The segment covering 197–218 (SGSGNFGGGRGGGFGGNDNFGR) has biased composition (gly residues). Residues 308–320 (SSSSSSYGSGRRF) are compositionally biased toward low complexity.

The protein is Heterogeneous nuclear ribonucleoprotein A1-like 3 of Homo sapiens (Human).